A 221-amino-acid polypeptide reads, in one-letter code: Woronin body major protein (221 aa).

The short motif at 219 to 221 (SRL) is the Microbody targeting signal element.

This sequence belongs to the eIF-5A family. Hex1 subfamily. As to quaternary structure, forms oligomers. Self-assembles into hexagonal rods.

It is found in the cell septum. In terms of biological role, major component of Woronin bodies, fungal-specific organelles that occlude septal pores in order to separate intact from damaged compartments. Hex1 binds directly or indirectly to the Woronin body tether that in turn is anchored at the rim of the septal pore. This Emericella nidulans (strain FGSC A4 / ATCC 38163 / CBS 112.46 / NRRL 194 / M139) (Aspergillus nidulans) protein is Woronin body major protein.